The primary structure comprises 437 residues: MSITKVHARTVYDSRGNPTVEVEITTENGLFRAIVPSGASTGIHEAVELRDGNKSEWMGKGVTKAVSNVNSIIGPALIKSELCVTNQKGIDELMISLDGTSNKSRLGANAILGVSLCVARAAAAQKGITLYKYIAELADARQDPFVIPVPFFNVLNGGAHAGGSLAMQEFKIAPVGAQSFAEAMRMGSEVYHHLKILAKEQYGPSAGNVGDEGGVAPDIDTAEDALDMIVEAINICGYEGRVKVGIDSAPSVFYKDGKYDLNFKEPNSDPSHWLSPAQLAEYYHSLLKKYPIISLEDPYAEDDWSSWSAFLKTVNVQIIADDLTCTNKTRIARAIEEKCANTLLLKLNQIGTLTESIEAANQAFDAGWGVMISHRSGETEDPFIADLVVGLRCGQIKSGALSRSERLAKYNELLRIEEELGDDCIYAGHRFHDGNKL.

Residues histidine 160 and glutamate 169 each coordinate substrate. Residue glutamate 212 is the Proton donor of the active site. Positions 247, 296, and 321 each coordinate Mg(2+). Glutamate 296 and aspartate 321 together coordinate substrate. Lysine 346 acts as the Proton acceptor in catalysis. Substrate-binding positions include 373-376 (SHRS) and lysine 397.

The protein belongs to the enolase family. It depends on Mg(2+) as a cofactor.

The enzyme catalyses (2R)-2-phosphoglycerate = phosphoenolpyruvate + H2O. It functions in the pathway carbohydrate degradation; glycolysis; pyruvate from D-glyceraldehyde 3-phosphate: step 4/5. The sequence is that of Enolase-related protein 1 (ERR1) from Saccharomyces cerevisiae (strain ATCC 204508 / S288c) (Baker's yeast).